Here is a 135-residue protein sequence, read N- to C-terminus: Transcription antitermination protein NusB (135 aa).

The segment at 115-135 (ATPAESTGRGSAVDSIPGQPS) is disordered.

It belongs to the NusB family.

In terms of biological role, involved in transcription antitermination. Required for transcription of ribosomal RNA (rRNA) genes. Binds specifically to the boxA antiterminator sequence of the ribosomal RNA (rrn) operons. In Frankia casuarinae (strain DSM 45818 / CECT 9043 / HFP020203 / CcI3), this protein is Transcription antitermination protein NusB.